A 988-amino-acid polypeptide reads, in one-letter code: Voltage-gated delayed rectifier potassium channel KCNH5 (988 aa).

Residues Met1 to Trp217 lie on the Cytoplasmic side of the membrane. One can recognise a PAS domain in the interval Gln12–Ser90. The region spanning Asn91 to Thr143 is the PAC domain. A helical membrane pass occupies residues Asp218–Phe238. Over Lys239–Asn243 the chain is Extracellular. The chain crosses the membrane as a helical span at residues Asn244 to Leu264. Over Asn265–Thr291 the chain is Cytoplasmic. A helical transmembrane segment spans residues Trp292 to Val312. Topologically, residues Asp313–Leu319 are extracellular. A helical; Voltage-sensor transmembrane segment spans residues Phe320–His340. The Cytoplasmic segment spans residues Tyr341–Ala346. A helical membrane pass occupies residues Ala347–Trp367. Topologically, residues Tyr368 to Tyr419 are extracellular. Asn403 carries an N-linked (GlcNAc...) asparagine glycan. Residues Val420–Pro440 constitute an intramembrane region (pore-forming). The Selectivity filter signature appears at Thr432–Asn437. Residues Thr441–Lys446 are Extracellular-facing. A helical membrane pass occupies residues Met447–Val467. Topologically, residues Thr468–Phe988 are cytoplasmic. Ala550–Thr667 contributes to the a nucleoside 3',5'-cyclic phosphate binding site. A calmodulin-binding region spans residues His704–Gln715. The tract at residues Lys717 to Gln742 is disordered. The span at Asn721–Gln742 shows a compositional bias: polar residues. Residue Lys785 forms a Glycyl lysine isopeptide (Lys-Gly) (interchain with G-Cter in ubiquitin) linkage. The interval Gly838 to Ile890 is disordered. Basic and acidic residues predominate over residues Ser871–Leu885. Ser883 carries the post-translational modification Phosphoserine. Residues Thr909–Pro948 are CAD (involved in subunit assembly). A disordered region spans residues Asp969–Phe988. Residues Glu977 to Phe988 show a composition bias toward basic and acidic residues.

It belongs to the potassium channel family. H (Eag) (TC 1.A.1.20) subfamily. Kv10.2/KCNH5 sub-subfamily. As to quaternary structure, homotetramer. The potassium channel is probably composed of a homo- or heterotetrameric complex of pore-forming alpha subunits that can associate with modulating beta subunits. Heteromultimer with KCNH1/EAG. Detected in brain, skeletal muscle, heart, placenta, lung and liver, and at low levels in kidney.

It is found in the membrane. The catalysed reaction is K(+)(in) = K(+)(out). Its function is as follows. Pore-forming (alpha) subunit of a voltage-gated delayed rectifier potassium channel that mediates outward-rectifying potassium currents which, on depolarization, reaches a steady-state level and do not inactivate. The kinetic is characterized by a slow activation time course and a small voltage dependence of the activation time constants, therefore, starts to open at more negative voltages. The activation kinetics depend on the prepulse potential and external divalent cation concentration. The time course of activation is biphasic with a fast and a slowly activating current component. With negative prepulses, the current activation is delayed and slowed down several fold, whereas more positive prepulses speed up activation, therefore the activation rate depends on holding potential. This chain is Voltage-gated delayed rectifier potassium channel KCNH5, found in Homo sapiens (Human).